Here is a 343-residue protein sequence, read N- to C-terminus: Proto-oncogene serine/threonine-protein kinase mos (343 aa).

The 277-residue stretch at 63 to 339 folds into the Protein kinase domain; sequence VCLMHRLGSG…LLQRDLKAFR (277 aa). Residues 69-77 and Lys-90 each bind ATP; that span reads LGSGGFGSV. Asp-198 serves as the catalytic Proton acceptor.

The protein belongs to the protein kinase superfamily. Ser/Thr protein kinase family. As to quaternary structure, interacts with MAP2K1/MEK1.

The protein resides in the cytoplasm. It catalyses the reaction L-seryl-[protein] + ATP = O-phospho-L-seryl-[protein] + ADP + H(+). The enzyme catalyses L-threonyl-[protein] + ATP = O-phospho-L-threonyl-[protein] + ADP + H(+). In terms of biological role, serine/threonine kinase involved in the regulation of MAPK signaling. Is an activator of the ERK1/2 signaling cascade playing an essential role in the stimulation of oocyte maturation. This chain is Proto-oncogene serine/threonine-protein kinase mos, found in Mus musculus (Mouse).